The sequence spans 202 residues: Peptide deformylase (202 aa).

The segment at 1-24 (MAGSFAQLAKNAEKKKPSISVSKE) is disordered. The Fe cation site is built by Cys-121 and His-163. Glu-164 is an active-site residue. His-167 contacts Fe cation.

Belongs to the polypeptide deformylase family. It depends on Fe(2+) as a cofactor.

It catalyses the reaction N-terminal N-formyl-L-methionyl-[peptide] + H2O = N-terminal L-methionyl-[peptide] + formate. Functionally, removes the formyl group from the N-terminal Met of newly synthesized proteins. Requires at least a dipeptide for an efficient rate of reaction. N-terminal L-methionine is a prerequisite for activity but the enzyme has broad specificity at other positions. The protein is Peptide deformylase of Prochlorococcus marinus (strain NATL2A).